The sequence spans 875 residues: Outer membrane usher protein FocD (875 aa).

Residues 1-38 (MFFGDGGQLLSDKSLTGSAGGGNNRMKFNILPLAFFIG) form the signal peptide. The cysteines at positions 852 and 874 are disulfide-linked.

The protein belongs to the fimbrial export usher family.

It is found in the cell outer membrane. Functionally, involved in the export and assembly of the F1C fimbriae subunits across the outer membrane. This is Outer membrane usher protein FocD (focD) from Escherichia coli.